The chain runs to 410 residues: Lissencephaly-1 homolog B (410 aa).

Positions 7–39 (QRDELNRAIADYLRSNGYEEAYSTFKKEAELDM) constitute a LisH domain. A coiled-coil region spans residues 56-82 (TSVIRLQKKVMELESKLNEAKEEITLG). WD repeat units follow at residues 106 to 147 (GHRS…RTLK), 148 to 187 (GHTDSVQDISFDQTGKLLASCSADMTIKLWDFQGFECIRT), 190 to 229 (GHDHNVSSVAIMPNGDHIVSASRDKTIKMWEVATGYCVKT), 232 to 271 (GHREWVRMVRPNQDGSLIASCSNDQTVRVWVATSKECKAE), 274 to 333 (EHEH…CLMT), 336 to 375 (GHDNWVRGVLVHPGGRFIVSCADDKTLRIWDYKNKRCMKT), and 378 to 410 (AHEHFVTSLDMHQTAPYVVTGSVDQTVKVWECR).

Belongs to the WD repeat LIS1/nudF family. As to quaternary structure, can self-associate. Component of the cytosolic PAF-AH (I) heterotetrameric enzyme, which is composed of PAFAH1B1 (beta), PAFAH1B2 (alpha2) and PAFAH1B3 (alpha1) subunits. The catalytic activity of the enzyme resides in the alpha1 (PAFAH1B3) and alpha2 (PAFAH1B2) subunits, whereas the beta subunit (PAFAH1B1) has regulatory activity. Trimer formation is not essential for the catalytic activity. Interacts with dynein, dynactin, nde1 and ndel1.

The protein localises to the cytoplasm. It localises to the cytoskeleton. It is found in the microtubule organizing center. The protein resides in the centrosome. Its function is as follows. Regulatory subunit (beta subunit) of the cytosolic type I platelet-activating factor (PAF) acetylhydrolase (PAF-AH (I)), an enzyme that catalyzes the hydrolyze of the acetyl group at the sn-2 position of PAF and its analogs and participates in PAF inactivation. Regulates the PAF-AH (I) activity in a catalytic dimer composition-dependent manner. Positively regulates the activity of the minus-end directed microtubule motor protein dynein. May enhance dynein-mediated microtubule sliding by targeting dynein to the microtubule plus end. Required for several dynein- and microtubule-dependent processes such as the maintenance of Golgi integrity, the peripheral transport of microtubule fragments and the coupling of the nucleus and centrosome. May be required for proliferation of neuronal precursors and neuronal migration. This chain is Lissencephaly-1 homolog B (pafah1b1-2), found in Salmo salar (Atlantic salmon).